The primary structure comprises 476 residues: Bifunctional protein HldE (476 aa).

The tract at residues 1–319 (MKVTLPAFEK…GALASHQGES (319 aa)) is ribokinase. An ATP-binding site is contributed by 195-198 (NMSE). Asp264 is an active-site residue. The interval 345 to 476 (MTNGCFDILH…SIIQNIMARQ (132 aa)) is cytidylyltransferase.

This sequence in the N-terminal section; belongs to the carbohydrate kinase PfkB family. The protein in the C-terminal section; belongs to the cytidylyltransferase family. In terms of assembly, homodimer.

The catalysed reaction is D-glycero-beta-D-manno-heptose 7-phosphate + ATP = D-glycero-beta-D-manno-heptose 1,7-bisphosphate + ADP + H(+). It carries out the reaction D-glycero-beta-D-manno-heptose 1-phosphate + ATP + H(+) = ADP-D-glycero-beta-D-manno-heptose + diphosphate. It functions in the pathway nucleotide-sugar biosynthesis; ADP-L-glycero-beta-D-manno-heptose biosynthesis; ADP-L-glycero-beta-D-manno-heptose from D-glycero-beta-D-manno-heptose 7-phosphate: step 1/4. Its pathway is nucleotide-sugar biosynthesis; ADP-L-glycero-beta-D-manno-heptose biosynthesis; ADP-L-glycero-beta-D-manno-heptose from D-glycero-beta-D-manno-heptose 7-phosphate: step 3/4. Catalyzes the phosphorylation of D-glycero-D-manno-heptose 7-phosphate at the C-1 position to selectively form D-glycero-beta-D-manno-heptose-1,7-bisphosphate. Its function is as follows. Catalyzes the ADP transfer from ATP to D-glycero-beta-D-manno-heptose 1-phosphate, yielding ADP-D-glycero-beta-D-manno-heptose. The sequence is that of Bifunctional protein HldE from Shewanella denitrificans (strain OS217 / ATCC BAA-1090 / DSM 15013).